Consider the following 224-residue polypeptide: SPI-2 type 3 secretion system stator protein (224 aa).

It belongs to the SctL stator family. As to quaternary structure, the core secretion machinery of the T3SS is composed of approximately 20 different proteins, including cytoplasmic components, a base, an export apparatus and a needle. This subunit is part of the cytosolic complex. Interacts directly with SsaN/SctN2 (T3SS-2 ATPase).

The protein localises to the cytoplasm. Component of the type III secretion system (T3SS), also called injectisome, which is used to inject bacterial effector proteins into eukaryotic host cells. Acts as a regulator of the SsaN/SctN2 ATPase activity. This chain is SPI-2 type 3 secretion system stator protein, found in Salmonella typhimurium (strain LT2 / SGSC1412 / ATCC 700720).